The sequence spans 71 residues: Large ribosomal subunit protein bL31 (71 aa).

Positions 16, 18, 37, and 40 each coordinate Zn(2+).

Belongs to the bacterial ribosomal protein bL31 family. Type A subfamily. As to quaternary structure, part of the 50S ribosomal subunit. The cofactor is Zn(2+).

In terms of biological role, binds the 23S rRNA. This is Large ribosomal subunit protein bL31 from Pseudoalteromonas atlantica (strain T6c / ATCC BAA-1087).